Consider the following 196-residue polypeptide: DnaA initiator-associating protein DiaA (196 aa).

The SIS domain occupies 34–196 (MVQSLLNGNK…DNTLFPHQND (163 aa)).

The protein belongs to the SIS family. DiaA subfamily. Homotetramer; dimer of dimers.

Required for the timely initiation of chromosomal replication via direct interactions with the DnaA initiator protein. In Pectobacterium carotovorum subsp. carotovorum (strain PC1), this protein is DnaA initiator-associating protein DiaA.